The sequence spans 455 residues: tRNA-2-methylthio-N(6)-dimethylallyladenosine synthase (455 aa).

Residues 10-130 (RKVFIKTYGC…LPDALKRVRR (121 aa)) enclose the MTTase N-terminal domain. 6 residues coordinate [4Fe-4S] cluster: Cys19, Cys55, Cys93, Cys171, Cys175, and Cys178. One can recognise a Radical SAM core domain in the interval 157 to 389 (RSRGVTAFLT…QALLLRQQKE (233 aa)). The TRAM domain occupies 392–454 (ESLVGKTMDV…PNSLFAEVAG (63 aa)).

The protein belongs to the methylthiotransferase family. MiaB subfamily. Monomer. It depends on [4Fe-4S] cluster as a cofactor.

It localises to the cytoplasm. The catalysed reaction is N(6)-dimethylallyladenosine(37) in tRNA + (sulfur carrier)-SH + AH2 + 2 S-adenosyl-L-methionine = 2-methylsulfanyl-N(6)-dimethylallyladenosine(37) in tRNA + (sulfur carrier)-H + 5'-deoxyadenosine + L-methionine + A + S-adenosyl-L-homocysteine + 2 H(+). Catalyzes the methylthiolation of N6-(dimethylallyl)adenosine (i(6)A), leading to the formation of 2-methylthio-N6-(dimethylallyl)adenosine (ms(2)i(6)A) at position 37 in tRNAs that read codons beginning with uridine. This Agrobacterium fabrum (strain C58 / ATCC 33970) (Agrobacterium tumefaciens (strain C58)) protein is tRNA-2-methylthio-N(6)-dimethylallyladenosine synthase.